An 833-amino-acid polypeptide reads, in one-letter code: V-type proton ATPase 116 kDa subunit a 4 (833 aa).

Residues methionine 1 to glutamate 390 lie on the Cytoplasmic side of the membrane. Residues isoleucine 391–phenylalanine 409 form a helical membrane-spanning segment. Residues glycine 410–aspartate 411 lie on the Vacuolar side of the membrane. A helical membrane pass occupies residues cysteine 412–asparagine 428. Residues glutamate 429 to asparagine 443 are Cytoplasmic-facing. The helical transmembrane segment at isoleucine 444 to serine 473 threads the bilayer. The Vacuolar portion of the chain corresponds to phenylalanine 474–serine 538. The helical transmembrane segment at tyrosine 539–leucine 558 threads the bilayer. Residues serine 559–phenylalanine 576 lie on the Cytoplasmic side of the membrane. Residues isoleucine 577 to lysine 597 traverse the membrane as a helical segment. Residues tryptophan 598–phenylalanine 642 are Vacuolar-facing. Residues phenylalanine 643–leucine 662 traverse the membrane as a helical segment. Topologically, residues arginine 663–threonine 720 are cytoplasmic. The disordered stretch occupies residues valine 681–lysine 700. The helical transmembrane segment at isoleucine 721–alanine 745 threads the bilayer. At glutamate 746–alanine 766 the chain is on the vacuolar side. Residues glycine 767–glutamate 805 form a helical membrane-spanning segment. Residues phenylalanine 806–glutamate 833 are Cytoplasmic-facing.

This sequence belongs to the V-ATPase 116 kDa subunit family. In terms of assembly, V-ATPase is a heteromultimeric enzyme made up of two complexes: the ATP-hydrolytic V1 complex and the proton translocation V0 complex. The V1 complex consists of three catalytic AB heterodimers that form a heterohexamer, three peripheral stalks each consisting of EG heterodimers, one central rotor including subunits D and F, and the regulatory subunits C and H. The proton translocation complex V0 consists of the proton transport subunit a, a ring of proteolipid subunits c9c'', rotary subunit d, subunits e and f, and the accessory subunits ATP6AP1/Ac45 and ATP6AP2/PRR. Interacts with the V1 complex V-ATPase subunit A ATP6V1A. Interacts with the V0 complex V-ATPase subunit c ATP6V0C. As to expression, specifically expressed in kidney, but not in the heart, brain, spleen, lung, liver, muscle, or testis. Distribution within the kidney appears more widespread than that seen in man. High intensity staining at the surface of intercalated cells, with additional expression in the proximal tubule.

Its subcellular location is the apical cell membrane. It is found in the basolateral cell membrane. In terms of biological role, subunit of the V0 complex of vacuolar(H+)-ATPase (V-ATPase), a multisubunit enzyme composed of a peripheral complex (V1) that hydrolyzes ATP and a membrane integral complex (V0) that translocates protons. V-ATPase is responsible for acidifying and maintaining the pH of intracellular compartments and in some cell types, is targeted to the plasma membrane, where it is responsible for acidifying the extracellular environment. Involved in normal vectorial acid transport into the urine by the kidney. The sequence is that of V-type proton ATPase 116 kDa subunit a 4 (Atp6v0a4) from Mus musculus (Mouse).